The following is a 61-amino-acid chain: Large ribosomal subunit protein uL30 (61 aa).

The protein belongs to the universal ribosomal protein uL30 family. In terms of assembly, part of the 50S ribosomal subunit.

This is Large ribosomal subunit protein uL30 from Corynebacterium jeikeium (strain K411).